The following is a 67-amino-acid chain: Large ribosomal subunit protein bL35 (67 aa).

Over residues 1-11 (MPKLKTRKAAA) the composition is skewed to basic residues. Residues 1–22 (MPKLKTRKAAAKRFEATGSGKK) form a disordered region.

This sequence belongs to the bacterial ribosomal protein bL35 family.

In Microcystis aeruginosa (strain NIES-843 / IAM M-2473), this protein is Large ribosomal subunit protein bL35.